Consider the following 330-residue polypeptide: NADH-quinone oxidoreductase subunit H (330 aa).

The next 8 membrane-spanning stretches (helical) occupy residues 5–25 (LLTL…VLTL), 78–98 (WVFM…FAVI), 120–140 (IGLL…ALGG), 155–175 (AMAQ…PVVM), 191–211 (SLPN…AIMA), 243–263 (FFVG…VLFL), 271–291 (LPGI…FIWV), and 308–328 (WKIL…WLIW).

This sequence belongs to the complex I subunit 1 family. NDH-1 is composed of 14 different subunits. Subunits NuoA, H, J, K, L, M, N constitute the membrane sector of the complex.

Its subcellular location is the cell inner membrane. The enzyme catalyses a quinone + NADH + 5 H(+)(in) = a quinol + NAD(+) + 4 H(+)(out). In terms of biological role, NDH-1 shuttles electrons from NADH, via FMN and iron-sulfur (Fe-S) centers, to quinones in the respiratory chain. The immediate electron acceptor for the enzyme in this species is believed to be ubiquinone. Couples the redox reaction to proton translocation (for every two electrons transferred, four hydrogen ions are translocated across the cytoplasmic membrane), and thus conserves the redox energy in a proton gradient. This subunit may bind ubiquinone. This chain is NADH-quinone oxidoreductase subunit H, found in Syntrophotalea carbinolica (strain DSM 2380 / NBRC 103641 / GraBd1) (Pelobacter carbinolicus).